Consider the following 810-residue polypeptide: Phenylalanine--tRNA ligase beta subunit (810 aa).

A tRNA-binding domain is found at 39 to 150 (RSWAAGVVLG…LDLPSGSPVG (112 aa)). The 89-residue stretch at 407–495 (RGEAIINLRL…RLYGYDHFCE (89 aa)) folds into the B5 domain. Positions 473, 479, 482, and 483 each coordinate Mg(2+). Residues 716 to 809 (SPYPAVARDL…LTKQFAVSLR (94 aa)) enclose the FDX-ACB domain.

Belongs to the phenylalanyl-tRNA synthetase beta subunit family. Type 1 subfamily. As to quaternary structure, tetramer of two alpha and two beta subunits. Requires Mg(2+) as cofactor.

The protein resides in the cytoplasm. The enzyme catalyses tRNA(Phe) + L-phenylalanine + ATP = L-phenylalanyl-tRNA(Phe) + AMP + diphosphate + H(+). In Synechocystis sp. (strain ATCC 27184 / PCC 6803 / Kazusa), this protein is Phenylalanine--tRNA ligase beta subunit (pheT).